The chain runs to 1529 residues: Slit homolog 2 protein (1529 aa).

The first 30 residues, 1-30, serve as a signal peptide directing secretion; sequence MRGVGWQMLSLSLGLVLAILNKVAPQACPA. Residues 31 to 55 enclose the LRRNT domain; the sequence is QCSCSGSTVDCHGLALRSVPRNIPR. LRR repeat units lie at residues 56-77, 80-101, 104-125, 128-149, 152-173, and 176-197; these read NTER…DFAG, HLRV…AFQD, ELER…LFLG, KLYR…AFRG, DIKN…AFRA, and DLEV…SFNH. An N-linked (GlcNAc...) asparagine glycan is attached at Asn66. An N-linked (GlcNAc...) asparagine glycan is attached at Asn186. Residues 209 to 259 enclose the LRRCT 1 domain; that stretch reads NNLYCDCHLAWLSDWLRQRPRVGLYTQCMGPSHLRGHNVAEVQKREFVCSG. Positions 264–300 constitute an LRRNT 2 domain; it reads MAPSCSVLHCPAACTCSNNIVDCRGKGLTEIPTNLPE. A disulfide bond links Cys277 and Cys286. 5 LRR repeats span residues 301–322, 325–346, 349–370, 373–394, and 397–418; these read TITE…AFSP, KLRR…AFQG, SLNS…LFEG, SLQL…AFQD, and NLNL…TFSP. Positions 430–480 constitute an LRRCT 2 domain; the sequence is NPFICDCHLKWLADYLHTNPIETSGARCTSPRRLANKRIGQIKSKKFRCSA. Disulfide bonds link Cys434/Cys457, Cys436/Cys478, Cys506/Cys512, and Cys510/Cys519. The LRRNT 3 domain maps to 497 to 533; it reads SGDCFADLACPEKCRCEGTTVDCSNQKLNKIPEHIPQ. 5 LRR repeats span residues 534 to 555, 559 to 580, 583 to 604, 607 to 628, and 631 to 652; these read YTAE…GIFK, QLRK…AFEG, GVNE…MFKG, SLKT…SFIG, and SVRL…AFDT. Residue Asn564 is glycosylated (N-linked (GlcNAc...) asparagine). Asn623 carries an N-linked (GlcNAc...) asparagine glycan. The 51-residue stretch at 664–714 folds into the LRRCT 3 domain; the sequence is NPFNCNCYLAWLGEWLRKKRIVTGNPRCQKPYFLKEIPIQDVAIQDFTCDD. Intrachain disulfides connect Cys668/Cys691, Cys670/Cys712, Cys727/Cys733, and Cys731/Cys740. The 37-residue stretch at 718-754 folds into the LRRNT 4 domain; sequence DNSCSPLSRCPTECTCLDTVVRCSNKGLKVLPKGIPR. 4 LRR repeats span residues 755-777, 778-799, 802-823, and 826-847; these read DVTE…SNYK, HLTL…SFSN, QLLT…TFDG, and SLRL…AFND. N-linked (GlcNAc...) asparagine glycans are attached at residues Asn794 and Asn799. Positions 859–909 constitute an LRRCT 4 domain; the sequence is NPLYCDCNMQWLSDWVKSEYKEPGIARCAGPGEMADKLLLTTPSKKFTCQG. 20 cysteine pairs are disulfide-bonded: Cys863-Cys886, Cys865-Cys907, Cys922-Cys933, Cys927-Cys943, Cys945-Cys954, Cys961-Cys972, Cys966-Cys984, Cys986-Cys995, Cys1002-Cys1013, Cys1007-Cys1022, Cys1024-Cys1033, Cys1040-Cys1053, Cys1047-Cys1062, Cys1064-Cys1073, Cys1080-Cys1091, Cys1085-Cys1100, Cys1102-Cys1111, Cys1125-Cys1136, Cys1130-Cys1145, and Cys1147-Cys1156. 2 consecutive EGF-like domains span residues 918-955 and 957-996; these read KCNP…QDCD and PIHA…ENCE. The EGF-like 3; calcium-binding domain maps to 998–1034; it reads NVDDCEDNDCENNSTCVDGINNYTCLCPPEYTGELCE. N-linked (GlcNAc...) asparagine glycosylation is found at Asn1009, Asn1010, and Asn1019. Residues 1036–1074 form the EGF-like 4 domain; it reads KLDFCAQDLNPCQHDSKCILTPKGFKCDCTPGYVGEHCD. The region spanning 1076 to 1112 is the EGF-like 5; calcium-binding domain; it reads DFDDCQDNKCKNGAHCTDAVNGYTCICPEGYSGLFCE. The region spanning 1121-1157 is the EGF-like 6 domain; the sequence is RTSPCDNFDCQNGAQCIVRINEPICQCLPGYQGEKCE. One can recognise a Laminin G-like domain in the interval 1160–1333; the sequence is VSVNFINKES…PMQTGILPGC (174 aa). Asn1183, Asn1266, and Asn1300 each carry an N-linked (GlcNAc...) asparagine glycan. 14 disulfides stabilise this stretch: Cys1307-Cys1333, Cys1336-Cys1346, Cys1341-Cys1356, Cys1358-Cys1367, Cys1375-Cys1385, Cys1380-Cys1395, Cys1397-Cys1406, Cys1416-Cys1426, Cys1421-Cys1436, Cys1438-Cys1447, Cys1453-Cys1492, Cys1471-Cys1506, Cys1482-Cys1522, and Cys1486-Cys1524. Positions 1332 to 1368 constitute an EGF-like 7 domain; it reads GCEPCHKKVCAHGTCQPSSQAGFTCECQEGWMGPLCD. Residues 1453-1528 form the CTCK domain; that stretch reads CRGERIRDYY…VVKCGCTRCV (76 aa).

In terms of assembly, interacts with GREM1. Homodimer. Binds ROBO1 and ROBO2 with high affinity. In terms of tissue distribution, fetal lung and kidney, and adult spinal cord. Weak expression in adult adrenal gland, thyroid, trachea and other tissues examined.

It is found in the secreted. Functionally, thought to act as molecular guidance cue in cellular migration, and function appears to be mediated by interaction with roundabout homolog receptors. During neural development involved in axonal navigation at the ventral midline of the neural tube and projection of axons to different regions. SLIT1 and SLIT2 seem to be essential for midline guidance in the forebrain by acting as repulsive signal preventing inappropriate midline crossing by axons projecting from the olfactory bulb. In spinal cord development may play a role in guiding commissural axons once they reached the floor plate by modulating the response to netrin. In vitro, silences the attractive effect of NTN1 but not its growth-stimulatory effect and silencing requires the formation of a ROBO1-DCC complex. May be implicated in spinal cord midline post-crossing axon repulsion. In vitro, only commissural axons that crossed the midline responded to SLIT2. In the developing visual system appears to function as repellent for retinal ganglion axons by providing a repulsion that directs these axons along their appropriate paths prior to, and after passage through, the optic chiasm. In vitro, collapses and repels retinal ganglion cell growth cones. Seems to play a role in branching and arborization of CNS sensory axons, and in neuronal cell migration. In vitro, Slit homolog 2 protein N-product, but not Slit homolog 2 protein C-product, repels olfactory bulb (OB) but not dorsal root ganglia (DRG) axons, induces OB growth cones collapse and induces branching of DRG axons. Seems to be involved in regulating leukocyte migration. In Homo sapiens (Human), this protein is Slit homolog 2 protein (SLIT2).